We begin with the raw amino-acid sequence, 293 residues long: GPN-loop GTPase 3 (293 aa).

13–18 provides a ligand contact to GTP; the sequence is GAGKST. A Gly-Pro-Asn (GPN)-loop; involved in dimer interface motif is present at residues 70-72; it reads GPN. Residue 176-179 participates in GTP binding; sequence SKMD. Positions 272–281 are enriched in basic and acidic residues; it reads HEAQEPREPN. A disordered region spans residues 272 to 293; the sequence is HEAQEPREPNDEQDVDYEDADI. Residues 282–293 are compositionally biased toward acidic residues; it reads DEQDVDYEDADI.

This sequence belongs to the GPN-loop GTPase family. In terms of assembly, heterodimers with gpn1 or gpn2. Binds to RNA polymerase II (RNAPII).

In terms of biological role, small GTPase required for proper nuclear import of RNA polymerase II and III (RNAPII and RNAPIII). May act at an RNAP assembly step prior to nuclear import. This chain is GPN-loop GTPase 3, found in Aspergillus fumigatus (strain ATCC MYA-4609 / CBS 101355 / FGSC A1100 / Af293) (Neosartorya fumigata).